Reading from the N-terminus, the 473-residue chain is Photosystem II CP43 reaction center protein (473 aa).

The propeptide occupies 1-14 (MKTLYSLRRFYHVE). Threonine 15 is modified (N-acetylthreonine). Phosphothreonine is present on threonine 15. 5 consecutive transmembrane segments (helical) span residues 69 to 93 (LFEV…PHLA), 134 to 155 (LLGP…KDRN), 178 to 200 (KALY…RKIA), 255 to 275 (KPFA…LSYS), and 291 to 312 (WFNN…ASQA). Glutamate 367 contributes to the [CaMn4O5] cluster binding site. Residues 447–471 (RARAAAAGFEKGIDRDFEPVLSMTP) traverse the membrane as a helical segment.

This sequence belongs to the PsbB/PsbC family. PsbC subfamily. In terms of assembly, PSII is composed of 1 copy each of membrane proteins PsbA, PsbB, PsbC, PsbD, PsbE, PsbF, PsbH, PsbI, PsbJ, PsbK, PsbL, PsbM, PsbT, PsbX, PsbY, PsbZ, Psb30/Ycf12, at least 3 peripheral proteins of the oxygen-evolving complex and a large number of cofactors. It forms dimeric complexes. It depends on Binds multiple chlorophylls and provides some of the ligands for the Ca-4Mn-5O cluster of the oxygen-evolving complex. It may also provide a ligand for a Cl- that is required for oxygen evolution. PSII binds additional chlorophylls, carotenoids and specific lipids. as a cofactor.

Its subcellular location is the plastid membrane. Functionally, one of the components of the core complex of photosystem II (PSII). It binds chlorophyll and helps catalyze the primary light-induced photochemical processes of PSII. PSII is a light-driven water:plastoquinone oxidoreductase, using light energy to abstract electrons from H(2)O, generating O(2) and a proton gradient subsequently used for ATP formation. In Cuscuta exaltata (Tall dodder), this protein is Photosystem II CP43 reaction center protein.